The following is a 396-amino-acid chain: Stearoyl-[acyl-carrier-protein] 9-desaturase 5, chloroplastic (396 aa).

A chloroplast-targeting transit peptide spans 1-29 (MAMAMDRIVFSPSSYVYRPCQARGSRSSR). Fe cation-binding residues include glutamate 137, glutamate 175, histidine 178, glutamate 228, glutamate 261, and histidine 264.

The protein belongs to the fatty acid desaturase type 2 family. Homodimer. It depends on Fe(2+) as a cofactor. As to expression, ubiquitously expressed with a preference in leaves, flowers and stems.

The protein resides in the plastid. It is found in the chloroplast stroma. It carries out the reaction octadecanoyl-[ACP] + 2 reduced [2Fe-2S]-[ferredoxin] + O2 + 2 H(+) = (9Z)-octadecenoyl-[ACP] + 2 oxidized [2Fe-2S]-[ferredoxin] + 2 H2O. It participates in lipid metabolism; fatty acid metabolism. Converts stearoyl-ACP to oleoyl-ACP by introduction of a cis double bond between carbons 9 and 10 of the acyl chain. This is Stearoyl-[acyl-carrier-protein] 9-desaturase 5, chloroplastic (S-ACP-DES5) from Arabidopsis thaliana (Mouse-ear cress).